The sequence spans 504 residues: 6,7,8-trihydroxycoumarin synthase (504 aa).

The helical transmembrane segment at 1 to 21 (MEPVFLFLILAFPIASVYLLF) threads the bilayer. The interval 363–368 (PAPVLV) is substrate specificity. Cysteine 444 contacts heme.

It belongs to the cytochrome P450 family. It depends on heme as a cofactor.

The protein resides in the microsome membrane. It participates in secondary metabolite biosynthesis. Involved in the biosynthesis of coumarins and furanocoumarins (FCs), natural products required for defense responses against attacks by predators with potential medical and agroindustrial usages such as anticoagulant, rodenticide and artificial vanilla substitutes. Able to catalyze the hydroxylation of esculetin to produce 6,7,8-trihydroxycoumarin. The sequence is that of 6,7,8-trihydroxycoumarin synthase from Pastinaca sativa (Wild parsnip).